Here is a 160-residue protein sequence, read N- to C-terminus: Ureidoglycolate lyase (160 aa).

The protein belongs to the ureidoglycolate lyase family. Homodimer. Ni(2+) serves as cofactor.

It catalyses the reaction (S)-ureidoglycolate = urea + glyoxylate. It functions in the pathway nitrogen metabolism; (S)-allantoin degradation. Its function is as follows. Catalyzes the catabolism of the allantoin degradation intermediate (S)-ureidoglycolate, generating urea and glyoxylate. Involved in the anaerobic utilization of allantoin as sole nitrogen source. Reinforces the induction of genes involved in the degradation of allantoin and glyoxylate by producing glyoxylate. The sequence is that of Ureidoglycolate lyase from Shigella flexneri serotype 5b (strain 8401).